We begin with the raw amino-acid sequence, 219 residues long: Trafficking protein particle complex subunit 4 (219 aa).

The protein belongs to the TRAPP small subunits family. TRAPPC4 subfamily. As to quaternary structure, component of the multisubunit TRAPP (transport protein particle) complex, which includes at least TRAPPC2, TRAPPC2L, TRAPPC3, TRAPPC3L, TRAPPC4, TRAPPC5, TRAPPC8, TRAPPC9, TRAPPC10, TRAPPC11 and TRAPPC12. Interacts with SDC2.

The protein resides in the postsynaptic cell membrane. It is found in the golgi apparatus membrane. The protein localises to the endoplasmic reticulum. It localises to the vesicle. Core component of the TRAPP complexes which has a function of guanine nucleotide exchange factor activity for Rab1 GTPase. Plays a role in vesicular transport from endoplasmic reticulum to Golgi and autophagy. May play a role in dendrite postsynaptic membrane trafficking. This chain is Trafficking protein particle complex subunit 4, found in Homo sapiens (Human).